Reading from the N-terminus, the 140-residue chain is MIDINAIKEALPHRYPMLLVDRVLEVSEDEIVALKNVTINEPFFNGHFPQYPVMPGVLIMEALAQTAGVLELSKEENKGKLVFYAGMDKVKFKKQVVPGDQLIMTAKFVKRRGTIAVVEAKAEVDGKLAASGTLTFAIGQ.

The active site involves histidine 47.

The protein belongs to the thioester dehydratase family. FabZ subfamily.

It is found in the cytoplasm. It carries out the reaction a (3R)-hydroxyacyl-[ACP] = a (2E)-enoyl-[ACP] + H2O. Involved in unsaturated fatty acids biosynthesis. Catalyzes the dehydration of short chain beta-hydroxyacyl-ACPs and long chain saturated and unsaturated beta-hydroxyacyl-ACPs. The sequence is that of 3-hydroxyacyl-[acyl-carrier-protein] dehydratase FabZ from Streptococcus gordonii (strain Challis / ATCC 35105 / BCRC 15272 / CH1 / DL1 / V288).